A 147-amino-acid polypeptide reads, in one-letter code: uncharacterized protein (147 aa).

Residues 69 to 89 (IFFFLSLYLSSIKIPMLILNI) traverse the membrane as a helical segment.

It is found in the membrane. This is an uncharacterized protein from Saccharomyces cerevisiae (strain ATCC 204508 / S288c) (Baker's yeast).